The sequence spans 760 residues: 5-methyltetrahydropteroyltriglutamate--homocysteine methyltransferase (760 aa).

Residues 17-20 (RELK) and Lys-118 contribute to the 5-methyltetrahydropteroyltri-L-glutamate site. L-homocysteine contacts are provided by residues 436–438 (IGS) and Glu-489. Residues 436-438 (IGS) and Glu-489 each bind L-methionine. Residues 520–521 (RC) and Trp-566 each bind 5-methyltetrahydropteroyltri-L-glutamate. Position 604 (Asp-604) interacts with L-homocysteine. Asp-604 is an L-methionine binding site. Glu-610 provides a ligand contact to 5-methyltetrahydropteroyltri-L-glutamate. Zn(2+) contacts are provided by His-646, Cys-648, and Glu-670. His-699 acts as the Proton donor in catalysis. Cys-731 contributes to the Zn(2+) binding site.

Belongs to the vitamin-B12 independent methionine synthase family. Requires Zn(2+) as cofactor.

The enzyme catalyses 5-methyltetrahydropteroyltri-L-glutamate + L-homocysteine = tetrahydropteroyltri-L-glutamate + L-methionine. It participates in amino-acid biosynthesis; L-methionine biosynthesis via de novo pathway; L-methionine from L-homocysteine (MetE route): step 1/1. Catalyzes the transfer of a methyl group from 5-methyltetrahydrofolate to homocysteine resulting in methionine formation. The chain is 5-methyltetrahydropteroyltriglutamate--homocysteine methyltransferase from Vibrio harveyi (Beneckea harveyi).